A 188-amino-acid chain; its full sequence is HTH-type transcriptional repressor AcnR (188 aa).

Residues 10–70 enclose the HTH tetR-type domain; that stretch reads TNSRQEILEG…ALAREDAARM (61 aa). A DNA-binding region (H-T-H motif) is located at residues 33 to 52; the sequence is TVRRLEEATGKSRGAIFHHF. Citrate-binding positions include 79-80, arginine 130, and asparagine 134; that span reads LV. Residue glutamate 181 coordinates Mg(2+). A citrate-binding site is contributed by arginine 185.

Homodimer.

Functionally, acnR negatively controls the expression of the aconitase gene acn. Binds to the imperfect inverted repeat in the acn promoter region. The chain is HTH-type transcriptional repressor AcnR from Corynebacterium glutamicum (strain ATCC 13032 / DSM 20300 / JCM 1318 / BCRC 11384 / CCUG 27702 / LMG 3730 / NBRC 12168 / NCIMB 10025 / NRRL B-2784 / 534).